A 65-amino-acid polypeptide reads, in one-letter code: Small ribosomal subunit protein bS21 (65 aa).

Belongs to the bacterial ribosomal protein bS21 family.

The chain is Small ribosomal subunit protein bS21 from Trichlorobacter lovleyi (strain ATCC BAA-1151 / DSM 17278 / SZ) (Geobacter lovleyi).